The following is a 210-amino-acid chain: Large ribosomal subunit protein uL3 (210 aa).

The segment at 125 to 151 is disordered; that stretch reads HGFGGGPRTHGQSDRLRAPGSIGAGTD.

This sequence belongs to the universal ribosomal protein uL3 family. In terms of assembly, part of the 50S ribosomal subunit. Forms a cluster with proteins L14 and L19.

Its function is as follows. One of the primary rRNA binding proteins, it binds directly near the 3'-end of the 23S rRNA, where it nucleates assembly of the 50S subunit. The polypeptide is Large ribosomal subunit protein uL3 (Roseiflexus sp. (strain RS-1)).